The following is a 1445-amino-acid chain: Spermatogenesis-associated protein 31E1 (1445 aa).

A helical transmembrane segment spans residues 64–84 (WMMDFILTSVCGLVLLFLLLL). 2 disordered regions span residues 90–115 (PPSP…SRSR) and 169–262 (VPAK…PDSS). A compositionally biased stretch (basic and acidic residues) spans 101 to 110 (SREPQRERSG). The segment covering 241–260 (VFPPSPQPHGPLASSPPPPD) has biased composition (pro residues). N-linked (GlcNAc...) asparagine glycosylation is present at Asn-408. Disordered stretches follow at residues 411–430 (TQPQ…TVGN), 460–557 (NPSS…ERTQ), 592–619 (LSQP…PGVV), and 637–761 (QEQS…KEHL). Residues 664 to 681 (PQSQAEDTQQALLPSQPS) are compositionally biased toward polar residues. N-linked (GlcNAc...) asparagine glycosylation is found at Asn-819, Asn-906, and Asn-1160. 4 disordered regions span residues 894–966 (FLGK…TCSL), 1143–1242 (RLPT…IGDK), 1254–1280 (KGQT…RKGG), and 1378–1445 (SPKA…CLAS). 2 stretches are compositionally biased toward polar residues: residues 906-915 (NRTTSKSVPT) and 1148-1165 (APLS…TASQ). Over residues 1202 to 1217 (DKGEAHRRPRTGEQGH) the composition is skewed to basic and acidic residues.

This sequence belongs to the SPATA31 family.

The protein resides in the membrane. Functionally, may play a role in spermatogenesis. The sequence is that of Spermatogenesis-associated protein 31E1 (SPATA31E1) from Homo sapiens (Human).